The chain runs to 712 residues: Sterol uptake control protein 2 (712 aa).

Positions 1–19 (MMMTVKQESPNSTLNTSEF) are enriched in polar residues. Positions 1 to 52 (MMMTVKQESPNSTLNTSEFSSDENLKTNNSEPPKKVSKSSTGKRKYHQKSRN) are disordered. Positions 35–50 (KVSKSSTGKRKYHQKS) are enriched in basic residues. The segment at residues 54 to 81 (CSTCKKRRVKCDEQRPVCGNCTKLKLDC) is a DNA-binding region (zn(2)-C6 fungal-type). Disordered regions lie at residues 95–150 (KKDI…VIPP) and 236–342 (TTVP…ANPL). Polar residues-rich tracts occupy residues 113-143 (STVS…QDIK), 252-306 (RKSQ…SGSP), and 326-337 (KSLPNISPNMSI).

It is found in the nucleus. In terms of biological role, transcription factor involved in the regulation of ergosterol biosynthetic genes such as ERG2 and ERG11 through direct binding to sterol response elements (SREs) in the promoters. Also binds to its own promoter on 2 cis-acting elements to promote autoregulation. Regulates sterol uptake across the plasma membrane. Acts as a major regulator of ascorbic acid-induced response. Plays a role in the triggering of pyroptosis, an inflammasome-mediated programmed cell death pathway in macrophages, allowing macrophages escaping. This is Sterol uptake control protein 2 from Candida albicans (strain SC5314 / ATCC MYA-2876) (Yeast).